We begin with the raw amino-acid sequence, 252 residues long: NAC domain-containing protein 83 (252 aa).

The region spanning 14 to 160 is the NAC domain; it reads LPPGFRFHPT…NWVLCRIFLK (147 aa). A DNA-binding region spans residues 110–166; sequence VGLKKTLVFYKGKPPHGSRTDWIMHEYRLSSSPPSSMGPTQNWVLCRIFLKKRAGNK. Disordered stretches follow at residues 165–194 and 217–252; these read NKND…IITT and LNLL…NSFR. Low complexity-rich tracts occupy residues 180 to 194 and 219 to 252; these read NNNN…IITT and LLPS…NSFR. The PEST-like stretch occupies residues 213 to 226; sequence RTTDLNLLPSSPSS.

Interacts with NAC007/VND4, NAC026/VND5 and NAC030/VND7. Interacts with the mungbean yellow mosaic virus (MYMV) AC1 replication-associated protein. In terms of tissue distribution, expressed in xylem and phloem cells in roots and inflorescence stems. Highly expressed in senescent leaves. Expressed in roots, and abscission and dehiscence tissues, such as axils of bracts and abscission zones in cauline leaves and siliques.

The protein localises to the nucleus. Functionally, transcriptional repressor that negatively regulates the expression of genes involved in xylem vessel formation. Represses the transcriptional activation activity of NAC030/VND7, which regulates protoxylem vessel differentiation by promoting immature xylem vessel-specific genes expression. Transcriptional activator that regulates the COLD-REGULATED (COR15A and COR15B) and RESPONSIVE TO DEHYDRATION (LTI78/RD29A and LTI65/RD29B) genes by binding directly to their promoters. Mediates signaling crosstalk between salt stress response and leaf aging process. May play a role in DNA replication of mungbean yellow mosaic virus. This Arabidopsis thaliana (Mouse-ear cress) protein is NAC domain-containing protein 83.